A 202-amino-acid polypeptide reads, in one-letter code: Small ribosomal subunit protein uS4c (202 aa).

Positions Met-90–Ile-153 constitute an S4 RNA-binding domain.

Belongs to the universal ribosomal protein uS4 family. In terms of assembly, part of the 30S ribosomal subunit. Contacts protein S5. The interaction surface between S4 and S5 is involved in control of translational fidelity.

The protein localises to the plastid. Its subcellular location is the chloroplast. One of the primary rRNA binding proteins, it binds directly to 16S rRNA where it nucleates assembly of the body of the 30S subunit. Functionally, with S5 and S12 plays an important role in translational accuracy. This Leucodon sciuroides (Moss) protein is Small ribosomal subunit protein uS4c (rps4).